The chain runs to 105 residues: uncharacterized protein (105 aa).

The disordered stretch occupies residues 47–105 (ENASAPRIQPSVTPSPAAPPSTDQLMMEKMMGSAGLNKYRKQEKEKQEEDGNGESLFDF). A compositionally biased stretch (basic and acidic residues) spans 86-95 (RKQEKEKQEE).

This is an uncharacterized protein from Bacillus subtilis (strain 168).